The chain runs to 305 residues: MIGILGAGAFGTALAVTLGREQPVTLWARGGTPRLAVDLPEQVQLTADFGEALAGTVLLAVPMQALGGLLRAEAARLQGRALVACCKGVDLATGLGPTGLIAEACPGSPAAILTGPSFAADIARGLPTALTLATQDEAAGEALQRQLSTAALRLYRTTDTVGAELGGALKNVIAIAAGVVIGAGLGQSARAALMTRGYAEMQRLALALGARPETLAGLSGLGDLVLTCTSDQSRNFRYGQALGAGAAFDGSVTVEGRATARAVVDLAVRHGIDMPIAAMVDALVEGRVTLPQAIQSLLSRPLKQE.

3 residues coordinate NADPH: Phe10, Arg29, and Lys87. Sn-glycerol 3-phosphate-binding residues include Lys87, Gly115, and Ser117. NADPH is bound at residue Ala119. The sn-glycerol 3-phosphate site is built by Lys170, Asp223, Ser233, Arg234, and Asn235. Lys170 (proton acceptor) is an active-site residue. Arg234 contributes to the NADPH binding site. Glu255 lines the NADPH pocket.

The protein belongs to the NAD-dependent glycerol-3-phosphate dehydrogenase family.

It is found in the cytoplasm. It carries out the reaction sn-glycerol 3-phosphate + NAD(+) = dihydroxyacetone phosphate + NADH + H(+). The catalysed reaction is sn-glycerol 3-phosphate + NADP(+) = dihydroxyacetone phosphate + NADPH + H(+). The protein operates within membrane lipid metabolism; glycerophospholipid metabolism. Its function is as follows. Catalyzes the reduction of the glycolytic intermediate dihydroxyacetone phosphate (DHAP) to sn-glycerol 3-phosphate (G3P), the key precursor for phospholipid synthesis. This is Glycerol-3-phosphate dehydrogenase [NAD(P)+] from Cereibacter sphaeroides (strain ATCC 17023 / DSM 158 / JCM 6121 / CCUG 31486 / LMG 2827 / NBRC 12203 / NCIMB 8253 / ATH 2.4.1.) (Rhodobacter sphaeroides).